Reading from the N-terminus, the 82-residue chain is Cysteine proteinase inhibitor A (82 aa).

Belongs to the cystatin family.

Strong inhibitor of papain and ficin but poor inhibitor of cathepsin H, B and L. The polypeptide is Cysteine proteinase inhibitor A (Helianthus annuus (Common sunflower)).